The primary structure comprises 186 residues: Ribosome-recycling factor (186 aa).

Positions 135–162 (DGMDGLKKAEKDGDIGQDESRAQSERVQ) are disordered.

This sequence belongs to the RRF family.

It is found in the cytoplasm. Its function is as follows. Responsible for the release of ribosomes from messenger RNA at the termination of protein biosynthesis. May increase the efficiency of translation by recycling ribosomes from one round of translation to another. The protein is Ribosome-recycling factor of Sinorhizobium fredii (strain NBRC 101917 / NGR234).